The primary structure comprises 329 residues: Ferredoxin--NADP reductase 2 (329 aa).

The FAD site is built by Thr18, Glu37, Gln45, Tyr50, Val90, Phe124, Asp285, and Ser326.

It belongs to the ferredoxin--NADP reductase type 2 family. Homodimer. FAD is required as a cofactor.

The catalysed reaction is 2 reduced [2Fe-2S]-[ferredoxin] + NADP(+) + H(+) = 2 oxidized [2Fe-2S]-[ferredoxin] + NADPH. This Bacillus mycoides (strain KBAB4) (Bacillus weihenstephanensis) protein is Ferredoxin--NADP reductase 2.